Consider the following 1079-residue polypeptide: Tudor domain-containing protein 7 (1079 aa).

The region spanning 1–69 (MLRAVLQANK…EVTCYAVACK (69 aa)) is the HTH OST-type 1 domain. The tract at residues 109–132 (KPKITLRQPGFTPPQEMMIRKPVP) is disordered. 2 HTH OST-type domains span residues 218–288 (DLPV…YATT) and 330–398 (PKDE…YGKS). 2 Tudor domains span residues 494–551 (PLRV…FYTL) and 684–741 (LPFC…LLRD).

Belongs to the TDRD7 family.

The protein resides in the cytoplasm. Component of specific cytoplasmic RNA granules involved in post-transcriptional regulation of specific genes: probably acts by binding to specific mRNAs and regulating their translation. Probably required during spermatogenesis. The chain is Tudor domain-containing protein 7 (tdrd7) from Xenopus laevis (African clawed frog).